A 367-amino-acid chain; its full sequence is NADH-quinone oxidoreductase subunit H (367 aa).

The next 8 membrane-spanning stretches (helical) occupy residues 18–38 (VLLF…VAYL), 87–107 (LCFL…WAVI), 132–152 (IGVL…IIAG), 180–200 (LTIV…IVIA), 204–224 (MPYW…ISAL), 257–277 (FFLG…IFFF), 291–311 (IIPG…CFIW), and 328–348 (GWKV…GILV).

This sequence belongs to the complex I subunit 1 family. In terms of assembly, NDH-1 is composed of 14 different subunits. Subunits NuoA, H, J, K, L, M, N constitute the membrane sector of the complex.

Its subcellular location is the cell inner membrane. It catalyses the reaction a quinone + NADH + 5 H(+)(in) = a quinol + NAD(+) + 4 H(+)(out). NDH-1 shuttles electrons from NADH, via FMN and iron-sulfur (Fe-S) centers, to quinones in the respiratory chain. The immediate electron acceptor for the enzyme in this species is believed to be ubiquinone. Couples the redox reaction to proton translocation (for every two electrons transferred, four hydrogen ions are translocated across the cytoplasmic membrane), and thus conserves the redox energy in a proton gradient. This subunit may bind ubiquinone. This Ehrlichia ruminantium (strain Gardel) protein is NADH-quinone oxidoreductase subunit H.